Consider the following 125-residue polypeptide: Small ribosomal subunit protein uS12 (125 aa).

A disordered region spans residues 1–28 (MPTISQLIGSERKRLTRKTKSPALKSCP). Asp89 is subject to 3-methylthioaspartic acid. A disordered region spans residues 104-125 (TAGVKDRRQSRSKYGAKAPKNN).

This sequence belongs to the universal ribosomal protein uS12 family. In terms of assembly, part of the 30S ribosomal subunit. Contacts proteins S8 and S17. May interact with IF1 in the 30S initiation complex.

Its function is as follows. With S4 and S5 plays an important role in translational accuracy. Functionally, interacts with and stabilizes bases of the 16S rRNA that are involved in tRNA selection in the A site and with the mRNA backbone. Located at the interface of the 30S and 50S subunits, it traverses the body of the 30S subunit contacting proteins on the other side and probably holding the rRNA structure together. The combined cluster of proteins S8, S12 and S17 appears to hold together the shoulder and platform of the 30S subunit. In Prochlorococcus marinus (strain MIT 9515), this protein is Small ribosomal subunit protein uS12.